The chain runs to 160 residues: Transcription elongation factor GreA (160 aa).

A coiled-coil region spans residues 14-76; the sequence is VKKLEEELEY…QLENMLKNAS (63 aa).

It belongs to the GreA/GreB family.

In terms of biological role, necessary for efficient RNA polymerase transcription elongation past template-encoded arresting sites. The arresting sites in DNA have the property of trapping a certain fraction of elongating RNA polymerases that pass through, resulting in locked ternary complexes. Cleavage of the nascent transcript by cleavage factors such as GreA or GreB allows the resumption of elongation from the new 3'terminus. GreA releases sequences of 2 to 3 nucleotides. In Clostridium botulinum (strain Okra / Type B1), this protein is Transcription elongation factor GreA.